The sequence spans 89 residues: MYLDAAKKQEIFEKYGKSNTDTGSAEAQIALFSYRISHLTEHLKLNRKDYSTERALTTLVGKRRALLNYLKNRDIERYRAIVKALGLRK.

The protein belongs to the universal ribosomal protein uS15 family. In terms of assembly, part of the 30S ribosomal subunit. Forms a bridge to the 50S subunit in the 70S ribosome, contacting the 23S rRNA.

Functionally, one of the primary rRNA binding proteins, it binds directly to 16S rRNA where it helps nucleate assembly of the platform of the 30S subunit by binding and bridging several RNA helices of the 16S rRNA. Its function is as follows. Forms an intersubunit bridge (bridge B4) with the 23S rRNA of the 50S subunit in the ribosome. The polypeptide is Small ribosomal subunit protein uS15 (Phocaeicola vulgatus (strain ATCC 8482 / DSM 1447 / JCM 5826 / CCUG 4940 / NBRC 14291 / NCTC 11154) (Bacteroides vulgatus)).